The primary structure comprises 225 residues: Thymidylate kinase (225 aa).

10–17 lines the ATP pocket; that stretch reads GGEGAGKT.

The protein belongs to the thymidylate kinase family.

The enzyme catalyses dTMP + ATP = dTDP + ADP. Functionally, phosphorylation of dTMP to form dTDP in both de novo and salvage pathways of dTTP synthesis. The sequence is that of Thymidylate kinase from Oceanobacillus iheyensis (strain DSM 14371 / CIP 107618 / JCM 11309 / KCTC 3954 / HTE831).